The primary structure comprises 341 residues: MLVLGIESSCDETGVALYDSAEGLVAHALHSQIAMHNAYGGVVPELASRDHIRRILPLTRQVFEESGRLLSELGGVAFTQGPGLAGALLVGAGMGRALAFALRVPAIGVHHLEGHLLSPLISDTPPAFPFVALLVSGGHTQLMLVSAVGQYTLLGETLDDAAGEAFDKTAQLLGLGYPGGPALSRLAAAGDATRFALPRPMLNSGDFDFSFSGLKTAVLTLVRKQGLGQAADIAAAFEAAAVDVLVGKSLAACRHAAANRLVVAGGVGANARLRERLTAEGGRAGVSVFYPSLEFCTDNGAMIAFAGAQRLASVADRVARASDLDFAVKPRWALASLGPVE.

Fe cation-binding residues include H111 and H115. Substrate is bound by residues 134–138 (LVSGG), D167, G180, and N270. Position 298 (D298) interacts with Fe cation.

Belongs to the KAE1 / TsaD family. Fe(2+) serves as cofactor.

It localises to the cytoplasm. The catalysed reaction is L-threonylcarbamoyladenylate + adenosine(37) in tRNA = N(6)-L-threonylcarbamoyladenosine(37) in tRNA + AMP + H(+). Required for the formation of a threonylcarbamoyl group on adenosine at position 37 (t(6)A37) in tRNAs that read codons beginning with adenine. Is involved in the transfer of the threonylcarbamoyl moiety of threonylcarbamoyl-AMP (TC-AMP) to the N6 group of A37, together with TsaE and TsaB. TsaD likely plays a direct catalytic role in this reaction. The sequence is that of tRNA N6-adenosine threonylcarbamoyltransferase from Thiobacillus denitrificans (strain ATCC 25259 / T1).